Consider the following 359-residue polypeptide: Protein RecA (359 aa).

77 to 84 (GPESSGKT) is a binding site for ATP.

It belongs to the RecA family.

The protein resides in the cytoplasm. Functionally, can catalyze the hydrolysis of ATP in the presence of single-stranded DNA, the ATP-dependent uptake of single-stranded DNA by duplex DNA, and the ATP-dependent hybridization of homologous single-stranded DNAs. It interacts with LexA causing its activation and leading to its autocatalytic cleavage. This chain is Protein RecA, found in Paramagnetospirillum magneticum (strain ATCC 700264 / AMB-1) (Magnetospirillum magneticum).